Here is a 241-residue protein sequence, read N- to C-terminus: Hybrid peroxiredoxin hyPrx5 (241 aa).

The Thioredoxin domain maps to 3–167 (SMEGKKVPQV…MLKYLAPQHQ (165 aa)). Cysteine 49 serves as the catalytic Cysteine sulfenic acid (-SOH) intermediate; for peroxiredoxin activity. In terms of domain architecture, Glutaredoxin spans 170–241 (ESISIFTKPG…GSDDLEKYFA (72 aa)). Cysteines 180 and 183 form a disulfide.

This sequence in the N-terminal section; belongs to the peroxiredoxin family. Prx5 subfamily. The protein in the C-terminal section; belongs to the glutaredoxin family. As to quaternary structure, homotetramer; interconnecting Prx and Grx domains of different monomers.

The catalysed reaction is a hydroperoxide + 2 glutathione = an alcohol + glutathione disulfide + H2O. In terms of biological role, thiol-specific peroxidase that catalyzes the reduction of hydrogen peroxide and organic hydroperoxides to water and alcohols, respectively. Plays a role in cell protection against oxidative stress by detoxifying peroxides. The sequence is that of Hybrid peroxiredoxin hyPrx5 (PGdx) from Haemophilus influenzae (strain ATCC 51907 / DSM 11121 / KW20 / Rd).